We begin with the raw amino-acid sequence, 447 residues long: GTPase Der (447 aa).

EngA-type G domains lie at 4 to 165 and 180 to 357; these read QIIT…PEEE and LQIV…KIWN. GTP-binding positions include 10–17, 57–61, 119–122, 186–193, 233–237, and 298–301; these read GRPNVGKS, DTPGL, NKCE, GRPNAGKS, DTAGL, and NKWD. The KH-like domain maps to 358–443; the sequence is KKITTSKLNE…PIRFIYVKTK (86 aa).

Belongs to the TRAFAC class TrmE-Era-EngA-EngB-Septin-like GTPase superfamily. EngA (Der) GTPase family. Associates with the 50S ribosomal subunit.

Functionally, GTPase that plays an essential role in the late steps of ribosome biogenesis. This chain is GTPase Der, found in Rickettsia peacockii (strain Rustic).